A 213-amino-acid chain; its full sequence is Ubiquitin-conjugating enzyme E2 S (213 aa).

A UBC core domain is found at 13–159 (QIIRQVAKEV…ARMMTEIHAK (147 aa)). C97 serves as the catalytic Glycyl thioester intermediate. The interval 157–213 (HAKPTTKTAPTKNEETNCPSTSGTQSTSEGPMAKKHAGDKNAAEKKKKEKKRALRRL) is disordered. Polar residues predominate over residues 174-185 (CPSTSGTQSTSE). A compositionally biased stretch (basic and acidic residues) spans 192 to 202 (HAGDKNAAEKK). A compositionally biased stretch (basic residues) spans 203-213 (KKEKKRALRRL).

It belongs to the ubiquitin-conjugating enzyme family.

The enzyme catalyses S-ubiquitinyl-[E1 ubiquitin-activating enzyme]-L-cysteine + [E2 ubiquitin-conjugating enzyme]-L-cysteine = [E1 ubiquitin-activating enzyme]-L-cysteine + S-ubiquitinyl-[E2 ubiquitin-conjugating enzyme]-L-cysteine.. The protein operates within protein modification; protein ubiquitination. Catalyzes the covalent attachment of ubiquitin to other proteins. Acts as an essential factor of the anaphase promoting complex/cyclosome (APC/C), a cell cycle-regulated ubiquitin ligase that controls progression through mitosis. Acts by specifically elongating polyubiquitin chains initiated by the E2 enzyme UBCH10 on APC/C substrates, enhancing the degradation of APC/C substrates by the proteasome and promoting mitotic exit. The sequence is that of Ubiquitin-conjugating enzyme E2 S from Branchiostoma floridae (Florida lancelet).